Reading from the N-terminus, the 232-residue chain is tRNA (guanine-N(1)-)-methyltransferase (232 aa).

Residues G112 and 132–137 (IGDYVL) contribute to the S-adenosyl-L-methionine site.

It belongs to the RNA methyltransferase TrmD family. In terms of assembly, homodimer.

It is found in the cytoplasm. It carries out the reaction guanosine(37) in tRNA + S-adenosyl-L-methionine = N(1)-methylguanosine(37) in tRNA + S-adenosyl-L-homocysteine + H(+). Functionally, specifically methylates guanosine-37 in various tRNAs. The chain is tRNA (guanine-N(1)-)-methyltransferase from Anaplasma phagocytophilum (strain HZ).